Consider the following 239-residue polypeptide: 1-(5-phosphoribosyl)-5-[(5-phosphoribosylamino)methylideneamino] imidazole-4-carboxamide isomerase (239 aa).

Residue Asp-8 is the Proton acceptor of the active site. Asp-129 acts as the Proton donor in catalysis.

Belongs to the HisA/HisF family.

Its subcellular location is the cytoplasm. The catalysed reaction is 1-(5-phospho-beta-D-ribosyl)-5-[(5-phospho-beta-D-ribosylamino)methylideneamino]imidazole-4-carboxamide = 5-[(5-phospho-1-deoxy-D-ribulos-1-ylimino)methylamino]-1-(5-phospho-beta-D-ribosyl)imidazole-4-carboxamide. It participates in amino-acid biosynthesis; L-histidine biosynthesis; L-histidine from 5-phospho-alpha-D-ribose 1-diphosphate: step 4/9. This is 1-(5-phosphoribosyl)-5-[(5-phosphoribosylamino)methylideneamino] imidazole-4-carboxamide isomerase from Legionella pneumophila (strain Corby).